Reading from the N-terminus, the 374-residue chain is UPF0754 membrane protein SAR1937 (374 aa).

A run of 2 helical transmembrane segments spans residues 4-24 (LFII…TNVI) and 354-374 (SLGF…AIFV).

It belongs to the UPF0754 family.

It localises to the cell membrane. In Staphylococcus aureus (strain MRSA252), this protein is UPF0754 membrane protein SAR1937.